The primary structure comprises 642 residues: 1-deoxy-D-xylulose-5-phosphate synthase (642 aa).

Thiamine diphosphate is bound by residues H73 and 114–116; that span reads SHA. Residue D145 coordinates Mg(2+). Thiamine diphosphate is bound by residues 146-147, N175, F286, and E367; that span reads GA. Position 175 (N175) interacts with Mg(2+).

This sequence belongs to the transketolase family. DXPS subfamily. In terms of assembly, homodimer. Mg(2+) is required as a cofactor. The cofactor is thiamine diphosphate.

The enzyme catalyses D-glyceraldehyde 3-phosphate + pyruvate + H(+) = 1-deoxy-D-xylulose 5-phosphate + CO2. Its pathway is metabolic intermediate biosynthesis; 1-deoxy-D-xylulose 5-phosphate biosynthesis; 1-deoxy-D-xylulose 5-phosphate from D-glyceraldehyde 3-phosphate and pyruvate: step 1/1. Catalyzes the acyloin condensation reaction between C atoms 2 and 3 of pyruvate and glyceraldehyde 3-phosphate to yield 1-deoxy-D-xylulose-5-phosphate (DXP). This chain is 1-deoxy-D-xylulose-5-phosphate synthase, found in Saccharopolyspora erythraea (strain ATCC 11635 / DSM 40517 / JCM 4748 / NBRC 13426 / NCIMB 8594 / NRRL 2338).